Reading from the N-terminus, the 639-residue chain is Testicular spindle-associated protein SHCBP1L (639 aa).

2 disordered regions span residues 1–25 and 48–75; these read MESD…EQTV and VASP…ETCD. Serine 3 carries the post-translational modification O-acetylserine. Residues serine 8, serine 19, and serine 50 each carry the phosphoserine modification. Residues 54–63 show a composition bias toward basic residues; sequence VKGKAARRRL. Residues 285-312 adopt a coiled-coil conformation; it reads IAQRFKKTLEKYKNKRVELIEYQSNIKE. PbH1 repeat units lie at residues 479-500, 501-523, 524-557, and 560-582; these read SGHL…CVLT, GASL…ELYP, GSIA…NMKV, and APKL…SILQ. Lysine 556 is subject to N6-acetyllysine. Lysine 631 is modified (N6-acetyllysine).

As to quaternary structure, interacts with HSPA2; this interaction may promote the recruitment of HSPA2 to the spindle. In terms of tissue distribution, expressed in pachytene spermatocytes and elongating spermatids inside the seminiferous tubules. Not detected in ovary (at protein level). Testis-specific.

It is found in the cytoplasm. Its subcellular location is the cytoskeleton. The protein localises to the spindle. Its function is as follows. Testis-specific spindle-associated factor that plays a role in spermatogenesis. In association with HSPA2, participates in the maintenance of spindle integrity during meiosis in male germ cells. This Mus musculus (Mouse) protein is Testicular spindle-associated protein SHCBP1L.